The sequence spans 1029 residues: Error-prone DNA polymerase (1029 aa).

It belongs to the DNA polymerase type-C family. DnaE2 subfamily.

It localises to the cytoplasm. The catalysed reaction is DNA(n) + a 2'-deoxyribonucleoside 5'-triphosphate = DNA(n+1) + diphosphate. DNA polymerase involved in damage-induced mutagenesis and translesion synthesis (TLS). It is not the major replicative DNA polymerase. This Saccharophagus degradans (strain 2-40 / ATCC 43961 / DSM 17024) protein is Error-prone DNA polymerase.